We begin with the raw amino-acid sequence, 213 residues long: 5-oxoprolinase subunit B (213 aa).

It belongs to the PxpB family. Forms a complex composed of PxpA, PxpB and PxpC.

It catalyses the reaction 5-oxo-L-proline + ATP + 2 H2O = L-glutamate + ADP + phosphate + H(+). Catalyzes the cleavage of 5-oxoproline to form L-glutamate coupled to the hydrolysis of ATP to ADP and inorganic phosphate. This is 5-oxoprolinase subunit B from Haemophilus influenzae (strain ATCC 51907 / DSM 11121 / KW20 / Rd).